A 392-amino-acid chain; its full sequence is Cytochrome b (392 aa).

4 helical membrane passes run F38 to M58, W82 to F104, V119 to V139, and F185 to A205. Residues H88 and H102 each contribute to the heme b site. Heme b is bound by residues H189 and H203. Residue H208 coordinates a ubiquinone. The next 4 helical transmembrane spans lie at F231–F251, S295–K315, I327–C347, and F354–P373.

Belongs to the cytochrome b family. In terms of assembly, the main subunits of complex b-c1 are: cytochrome b, cytochrome c1 and the Rieske protein. Heme b serves as cofactor.

Its subcellular location is the mitochondrion inner membrane. In terms of biological role, component of the ubiquinol-cytochrome c reductase complex (complex III or cytochrome b-c1 complex) that is part of the mitochondrial respiratory chain. The b-c1 complex mediates electron transfer from ubiquinol to cytochrome c. Contributes to the generation of a proton gradient across the mitochondrial membrane that is then used for ATP synthesis. The sequence is that of Cytochrome b (MT-CYB) from Vicia faba (Broad bean).